Reading from the N-terminus, the 383-residue chain is Retrovirus-related Pol polyprotein from type-1 retrotransposable element R1 3 (383 aa).

The Reverse transcriptase domain occupies 1–88 (VDAFADDLLL…DRVRYLGVNV (88 aa)). The segment at 229–383 (LSLHECRELV…VQRMRENEES (155 aa)) is nucleic acid-binding endonuclease.

The enzyme catalyses DNA(n) + a 2'-deoxyribonucleoside 5'-triphosphate = DNA(n+1) + diphosphate. The polypeptide is Retrovirus-related Pol polyprotein from type-1 retrotransposable element R1 3 (Nasonia vitripennis (Parasitic wasp)).